Reading from the N-terminus, the 143-residue chain is Peptide methionine sulfoxide reductase MsrB (143 aa).

The MsrB domain occupies 16 to 139 (DAELRRRLTP…NSAALNFESR (124 aa)). 4 residues coordinate Zn(2+): cysteine 55, cysteine 58, cysteine 104, and cysteine 107. Cysteine 128 (nucleophile) is an active-site residue.

The protein belongs to the MsrB Met sulfoxide reductase family. Zn(2+) serves as cofactor.

It catalyses the reaction L-methionyl-[protein] + [thioredoxin]-disulfide + H2O = L-methionyl-(R)-S-oxide-[protein] + [thioredoxin]-dithiol. The protein is Peptide methionine sulfoxide reductase MsrB of Burkholderia ambifaria (strain MC40-6).